The following is a 163-amino-acid chain: Nucleotide-binding protein Dhaf_3127 (163 aa).

It belongs to the YajQ family.

Functionally, nucleotide-binding protein. The polypeptide is Nucleotide-binding protein Dhaf_3127 (Desulfitobacterium hafniense (strain DSM 10664 / DCB-2)).